The sequence spans 66 residues: Toxin Tppa1 (66 aa).

The LCN-type CS-alpha/beta domain occupies 1–63 (KDGYLVGNDG…TWSRSTNRCG (63 aa)). 4 disulfide bridges follow: C11-C62, C15-C37, C23-C43, and C27-C45.

It belongs to the long (4 C-C) scorpion toxin superfamily. Sodium channel inhibitor family. Beta subfamily. Expressed by the venom gland.

It localises to the secreted. Beta toxins bind voltage-independently at site-4 of sodium channels (Nav) and shift the voltage of activation toward more negative potentials thereby affecting sodium channel activation and promoting spontaneous and repetitive firing. The polypeptide is Toxin Tppa1 (Tityus pachyurus (Colombian scorpion)).